The chain runs to 213 residues: Succinate dehydrogenase subunit 3-1, mitochondrial (213 aa).

A mitochondrion-targeting transit peptide spans 1 to 105; it reads MAATALFRSI…LDVGTSKRLF (105 aa). H130 serves as a coordination point for heme. Residues 148–165 traverse the membrane as a helical segment; the sequence is ISGVYLTGVTFAGYLLYL.

In terms of assembly, component of complex II composed of eight subunits in plants: four classical SDH subunits SDH1, SDH2, SDH3 and SDH4 (a flavoprotein (FP), an iron-sulfur protein (IP), and a cytochrome b composed of a large and a small subunit.), as well as four subunits unknown in mitochondria from bacteria and heterotrophic eukaryotes. Requires heme as cofactor. Expressed in flowers, inflorescences and stems.

It localises to the mitochondrion inner membrane. Its pathway is carbohydrate metabolism; tricarboxylic acid cycle. Its function is as follows. Membrane-anchoring subunit of succinate dehydrogenase (SDH). The protein is Succinate dehydrogenase subunit 3-1, mitochondrial of Arabidopsis thaliana (Mouse-ear cress).